The chain runs to 183 residues: Ribosome maturation factor RimM (183 aa).

One can recognise a PRC barrel domain in the interval 105-181 (ANEYHLMDLI…RIEIDPPLGL (77 aa)).

Belongs to the RimM family. In terms of assembly, binds ribosomal protein uS19.

The protein localises to the cytoplasm. Functionally, an accessory protein needed during the final step in the assembly of 30S ribosomal subunit, possibly for assembly of the head region. Essential for efficient processing of 16S rRNA. May be needed both before and after RbfA during the maturation of 16S rRNA. It has affinity for free ribosomal 30S subunits but not for 70S ribosomes. In Thermosynechococcus vestitus (strain NIES-2133 / IAM M-273 / BP-1), this protein is Ribosome maturation factor RimM.